The following is a 334-amino-acid chain: Protein OPG181 (334 aa).

It belongs to the orthopoxvirus OPG181 family.

The chain is Protein OPG181 (OPG181) from Bos taurus (Bovine).